We begin with the raw amino-acid sequence, 249 residues long: NADH-quinone oxidoreductase subunit C (249 aa).

The protein belongs to the complex I 30 kDa subunit family. NDH-1 is composed of 14 different subunits. Subunits NuoB, C, D, E, F, and G constitute the peripheral sector of the complex.

It is found in the cell inner membrane. It catalyses the reaction a quinone + NADH + 5 H(+)(in) = a quinol + NAD(+) + 4 H(+)(out). Its function is as follows. NDH-1 shuttles electrons from NADH, via FMN and iron-sulfur (Fe-S) centers, to quinones in the respiratory chain. The immediate electron acceptor for the enzyme in this species is believed to be ubiquinone. Couples the redox reaction to proton translocation (for every two electrons transferred, four hydrogen ions are translocated across the cytoplasmic membrane), and thus conserves the redox energy in a proton gradient. In Stenotrophomonas maltophilia (strain R551-3), this protein is NADH-quinone oxidoreductase subunit C.